Consider the following 622-residue polypeptide: Dehydrogenase xptC (622 aa).

Residues 1 to 18 form the signal peptide; the sequence is MAKLSVILLFRSLLLCGA. Residues 47 to 48, 68 to 69, and 123 to 126 each bind FAD; these read VS, EA, and NAMI. N160, N173, N357, N364, and N480 each carry an N-linked (GlcNAc...) asparagine glycan. 598-599 is an FAD binding site; it reads PM.

It belongs to the GMC oxidoreductase family. As to quaternary structure, homodimer. Requires FAD as cofactor.

It participates in secondary metabolite biosynthesis. Dehydrogenase involved in the conversion of monodictyphenone to the prenyl xanthones such as emericellin, shamixanthone and epishamixanthone. Monodictyphenone is first converted to variecoxanthone A via a paeciloxanthone intermediate by the consecutive actions of the FAD-dependent monooxygenase mdpD and the xanthone prenyltransferase xptB. XptB catalyzes regular O-prenylation at the hydroxy group of C-7 of the xanthone ring. Variecoxanthone A is further prenylated to emericellin by xptA before being reduced to shamixanthone and epishamixanthone by the dehydrogenase xptC. The protein is Dehydrogenase xptC of Emericella nidulans (strain FGSC A4 / ATCC 38163 / CBS 112.46 / NRRL 194 / M139) (Aspergillus nidulans).